A 289-amino-acid chain; its full sequence is Shikimate dehydrogenase (NADP(+)) (289 aa).

Shikimate is bound by residues 22 to 24 (SRS) and Thr69. The active-site Proton acceptor is the Lys73. Glu85 contacts NADP(+). Residues Asn94 and Asp109 each coordinate shikimate. NADP(+)-binding positions include 134–138 (GAGGA), 158–163 (NRTLSR), and Ile226. Residue Tyr228 coordinates shikimate. Gly249 provides a ligand contact to NADP(+).

This sequence belongs to the shikimate dehydrogenase family. Homodimer.

It carries out the reaction shikimate + NADP(+) = 3-dehydroshikimate + NADPH + H(+). It participates in metabolic intermediate biosynthesis; chorismate biosynthesis; chorismate from D-erythrose 4-phosphate and phosphoenolpyruvate: step 4/7. In terms of biological role, involved in the biosynthesis of the chorismate, which leads to the biosynthesis of aromatic amino acids. Catalyzes the reversible NADPH linked reduction of 3-dehydroshikimate (DHSA) to yield shikimate (SA). The sequence is that of Shikimate dehydrogenase (NADP(+)) from Brucella melitensis biotype 2 (strain ATCC 23457).